We begin with the raw amino-acid sequence, 834 residues long: Ras GTPase-activating protein 3 (834 aa).

C2 domains follow at residues 1-112 (MAVE…DTWF) and 123-263 (VQGK…EAWY). At alanine 2 the chain carries N-acetylalanine. Tyrosine 66 is modified (phosphotyrosine). Phosphoserine is present on serine 77. The residue at position 110 (threonine 110) is a Phosphothreonine. In terms of domain architecture, Ras-GAP spans 346–561 (GRVVPFISAI…DAVKNFLDLI (216 aa)). One can recognise a PH domain in the interval 576–677 (ILLKEGFMIK…WIDILTKVSQ (102 aa)). The Btk-type zinc-finger motif lies at 679–715 (NQKRLTVFHPSAYLNGHWLCCRASSDTAAGCTPCTGG). The Zn(2+) site is built by histidine 687, cysteine 698, cysteine 699, and cysteine 709. Residues serine 809 and serine 833 each carry the phosphoserine modification.

As to expression, high levels in brain, lower in spleen and lung.

Inhibitory regulator of the Ras-cyclic AMP pathway. May bind inositol tetrakisphosphate (IP4). This Mus musculus (Mouse) protein is Ras GTPase-activating protein 3 (Rasa3).